We begin with the raw amino-acid sequence, 180 residues long: Bifunctional protein PyrR (180 aa).

The PRPP-binding signature appears at 101-113 (VILVDDVLYTGRT).

The protein belongs to the purine/pyrimidine phosphoribosyltransferase family. PyrR subfamily. In terms of assembly, homodimer and homohexamer; in equilibrium.

The catalysed reaction is UMP + diphosphate = 5-phospho-alpha-D-ribose 1-diphosphate + uracil. Regulates transcriptional attenuation of the pyrimidine nucleotide (pyr) operon by binding in a uridine-dependent manner to specific sites on pyr mRNA. This disrupts an antiterminator hairpin in the RNA and favors formation of a downstream transcription terminator, leading to a reduced expression of downstream genes. Its function is as follows. Also displays a weak uracil phosphoribosyltransferase activity which is not physiologically significant. This Bacillus cereus (strain ATCC 14579 / DSM 31 / CCUG 7414 / JCM 2152 / NBRC 15305 / NCIMB 9373 / NCTC 2599 / NRRL B-3711) protein is Bifunctional protein PyrR.